Here is a 198-residue protein sequence, read N- to C-terminus: Dephospho-CoA kinase (198 aa).

Residues Phe-4–Arg-198 form the DPCK domain. Position 12–17 (Ala-12–Thr-17) interacts with ATP.

The protein belongs to the CoaE family.

It is found in the cytoplasm. The catalysed reaction is 3'-dephospho-CoA + ATP = ADP + CoA + H(+). Its pathway is cofactor biosynthesis; coenzyme A biosynthesis; CoA from (R)-pantothenate: step 5/5. Catalyzes the phosphorylation of the 3'-hydroxyl group of dephosphocoenzyme A to form coenzyme A. This Lactobacillus johnsonii (strain CNCM I-12250 / La1 / NCC 533) protein is Dephospho-CoA kinase.